Consider the following 276-residue polypeptide: MPIDNLPPLREVIDTYGLQAHKSLGQNFLFDLNLTSKIAHQAGTIEGKPVLEIGPGPGGLTRALLAKGAIVTAIERDERCIPALLEIEKHYPNQLKLICNDALKQDFSKLFGSSPEKPRIIANLPYNIGTQLLLNWLLVEPWPPFYESMTLMFQREVAKRITAKPQSSHYGRLSVLTGWRTIAKIAFDVPPQAFIPAPKVTSSVVHIIPRAQPLVCSAQKLSLITKTAFGQRRKMLRQNLKTLGGEIILEKAGIDGTRRAETLSISEFVTLANLIT.

S-adenosyl-L-methionine contacts are provided by N27, L29, G54, E75, D101, and N123.

The protein belongs to the class I-like SAM-binding methyltransferase superfamily. rRNA adenine N(6)-methyltransferase family. RsmA subfamily.

It is found in the cytoplasm. The enzyme catalyses adenosine(1518)/adenosine(1519) in 16S rRNA + 4 S-adenosyl-L-methionine = N(6)-dimethyladenosine(1518)/N(6)-dimethyladenosine(1519) in 16S rRNA + 4 S-adenosyl-L-homocysteine + 4 H(+). In terms of biological role, specifically dimethylates two adjacent adenosines (A1518 and A1519) in the loop of a conserved hairpin near the 3'-end of 16S rRNA in the 30S particle. May play a critical role in biogenesis of 30S subunits. This is Ribosomal RNA small subunit methyltransferase A from Bartonella tribocorum (strain CIP 105476 / IBS 506).